The primary structure comprises 248 residues: DNA repair protein RecO (248 aa).

Belongs to the RecO family.

Functionally, involved in DNA repair and RecF pathway recombination. The protein is DNA repair protein RecO of Bacillus cereus (strain 03BB102).